A 313-amino-acid chain; its full sequence is Thiamine thiazole synthase (313 aa).

Residues Ala71, 92–93 (EA), Gly100, and Val165 each bind substrate. The residue at position 199 (Cys199) is a 2,3-didehydroalanine (Cys). Substrate contacts are provided by residues Asp201, His216, Met268, and 278–280 (RMG).

It belongs to the THI4 family. Homooctamer. Fe cation is required as a cofactor. In terms of processing, during the catalytic reaction, a sulfide is transferred from Cys-199 to a reaction intermediate, generating a dehydroalanine residue.

The protein resides in the cytoplasm. Its subcellular location is the nucleus. It catalyses the reaction [ADP-thiazole synthase]-L-cysteine + glycine + NAD(+) = [ADP-thiazole synthase]-dehydroalanine + ADP-5-ethyl-4-methylthiazole-2-carboxylate + nicotinamide + 3 H2O + 2 H(+). In terms of biological role, involved in biosynthesis of the thiamine precursor thiazole. Catalyzes the conversion of NAD and glycine to adenosine diphosphate 5-(2-hydroxyethyl)-4-methylthiazole-2-carboxylic acid (ADT), an adenylated thiazole intermediate. The reaction includes an iron-dependent sulfide transfer from a conserved cysteine residue of the protein to a thiazole intermediate. The enzyme can only undergo a single turnover, which suggests it is a suicide enzyme. May have additional roles in adaptation to various stress conditions and in DNA damage tolerance. This is Thiamine thiazole synthase from Coprinopsis cinerea (strain Okayama-7 / 130 / ATCC MYA-4618 / FGSC 9003) (Inky cap fungus).